The sequence spans 1499 residues: Phospholipid-transporting ATPase VA (1499 aa).

A disordered region spans residues 1–53; it reads MEREPAGTEEPGPPGRRRRREGRTRTVRSNLLPPPGAEDPAAGAAKGERRRRR. Residues 1–86 are Cytoplasmic-facing; it reads MEREPAGTEE…KNLFEQFHRP (86 aa). Residues 15–26 are compositionally biased toward basic residues; that stretch reads GRRRRREGRTRT. A helical membrane pass occupies residues 87–106; the sequence is ANVYFVFIALLNFVPAVNAF. Residues 107 to 110 are Exoplasmic loop-facing; the sequence is QPGL. Residues 111–128 traverse the membrane as a helical segment; it reads ALAPVLFILAITAFRDLW. The Cytoplasmic portion of the chain corresponds to 129–309; it reads EDYSRHRSDH…SKLERQMNCD (181 aa). Residues 310-332 form a helical membrane-spanning segment; it reads VLWCVLLLVCMSLFSAVGHGLWI. Topologically, residues 333-362 are exoplasmic loop; sequence WRYQEKKSLFYVPKSDGSSLSPVTAAVYSF. Residues 363–384 traverse the membrane as a helical segment; sequence LTMIIVLQVLIPISLYVSIEIV. Residues 385 to 1087 are Cytoplasmic-facing; that stretch reads KACQVYFINQ…GHWCYSRLAN (703 aa). Residue Asp427 is the 4-aspartylphosphate intermediate of the active site. ATP-binding residues include Asp427, Lys428, and Thr429. Asp427 provides a ligand contact to Mg(2+). Thr429 lines the Mg(2+) pocket. The tract at residues 464-531 is disordered; that stretch reads ADSEEEEVVP…AFSSPMEKDI (68 aa). Ser466 bears the Phosphoserine mark. The segment covering 477 to 499 has biased composition (polar residues); it reads SVSQRGSIGSHQSVRVVHRTQST. The ATP site is built by Glu700, Phe742, Lys766, Arg809, Thr889, Gly890, Asp891, Arg1005, and Lys1011. Position 1031 (Asp1031) interacts with Mg(2+). ATP is bound by residues Asn1034 and Asp1035. Asp1035 is a Mg(2+) binding site. Residues 1088 to 1108 form a helical membrane-spanning segment; it reads MVLYFFYKNTMFVGLLFWFQF. Over 1109–1119 the chain is Exoplasmic loop; sequence FCGFSASTMID. A helical membrane pass occupies residues 1120–1140; the sequence is QWYLIFFNLLFSSLPPLVTGV. Over 1141–1170 the chain is Cytoplasmic; that stretch reads LDRDVPANVLLTNPQLYKSGQNMEEYRPRT. A helical transmembrane segment spans residues 1171–1192; it reads FWFNMADAAFQSLVCFSIPYLA. The Exoplasmic loop portion of the chain corresponds to 1193 to 1199; the sequence is YYDSNVD. A helical transmembrane segment spans residues 1200–1222; it reads LFTWGTPIVTIALLTFLLHLGIE. Over 1223-1228 the chain is Cytoplasmic; sequence TKTWTW. Residues 1229–1249 traverse the membrane as a helical segment; sequence LNWITCGFSVLLFFTVALIYN. The Exoplasmic loop portion of the chain corresponds to 1250–1267; sequence ASCATCYPPSNPYWTMQA. The chain crosses the membrane as a helical span at residues 1268–1292; it reads LLGDPVFYLTCLMTPVAALLPRLFF. Topologically, residues 1293–1499 are cytoplasmic; that stretch reads RSLQGRVFPT…LIGASSRRSQ (207 aa). Disordered regions lie at residues 1311-1356 and 1464-1499; these read TRKS…PSWH and DGQA…RRSQ. The span at 1330-1340 shows a compositional bias: basic and acidic residues; the sequence is LPKDSGTEHSS. The segment covering 1341 to 1356 has biased composition (polar residues); the sequence is GRTVKTSVPLSQPSWH.

Belongs to the cation transport ATPase (P-type) (TC 3.A.3) family. Type IV subfamily. Component of a P4-ATPase flippase complex which consists of a catalytic alpha subunit ATP10A and an accessory beta subunit TMEM30A. Mg(2+) is required as a cofactor. Autophosphorylated at the conserved aspartate of the P-type ATPase signature sequence. Widely expressed, with highest levels in kidney, followed by lung, brain, prostate, testis, ovary and small intestine.

It is found in the cell membrane. Its subcellular location is the endoplasmic reticulum membrane. It carries out the reaction ATP + H2O + phospholipidSide 1 = ADP + phosphate + phospholipidSide 2.. It catalyses the reaction a 1,2-diacyl-sn-glycero-3-phosphocholine(out) + ATP + H2O = a 1,2-diacyl-sn-glycero-3-phosphocholine(in) + ADP + phosphate + H(+). The enzyme catalyses a beta-D-glucosyl-(1&lt;-&gt;1')-N-acylsphing-4-enine(out) + ATP + H2O = a beta-D-glucosyl-(1&lt;-&gt;1')-N-acylsphing-4-enine(in) + ADP + phosphate + H(+). Inhibited under hypotonic conditions. Functionally, catalytic component of P4-ATPase flippase complex, which catalyzes the hydrolysis of ATP coupled to the transport of phosphatidylcholine (PC) from the outer to the inner leaflet of the plasma membrane. Initiates inward plasma membrane bending and recruitment of Bin/amphiphysin/Rvs (BAR) domain-containing proteins involved in membrane tubulation and cell trafficking. Facilitates ITGB1/beta1 integrin endocytosis, delaying cell adhesion and cell spreading on extracellular matrix. Has low flippase activity toward glucosylceramide (GlcCer). The polypeptide is Phospholipid-transporting ATPase VA (Homo sapiens (Human)).